A 164-amino-acid chain; its full sequence is UPF0561 protein C2orf68 homolog (164 aa).

2 stretches are compositionally biased toward basic and acidic residues: residues 1-13 (MEVIRDGEGESVK) and 35-49 (IARDDYDREVKQAKE). The segment at 1–98 (MEVIRDGEGE…WNESSSGTEM (98 aa)) is disordered. Basic residues predominate over residues 50-64 (KQRRRHTNTPRRPRR).

This sequence belongs to the UPF0561 family.

The protein is UPF0561 protein C2orf68 homolog of Danio rerio (Zebrafish).